Here is a 306-residue protein sequence, read N- to C-terminus: NAD kinase 1 (306 aa).

Asp67 serves as the catalytic Proton acceptor. NAD(+) contacts are provided by residues 67–68, 149–150, and Asp181; these read DG and NE.

It belongs to the NAD kinase family. It depends on a divalent metal cation as a cofactor.

The protein localises to the cytoplasm. The catalysed reaction is NAD(+) + ATP = ADP + NADP(+) + H(+). Its function is as follows. Involved in the regulation of the intracellular balance of NAD and NADP, and is a key enzyme in the biosynthesis of NADP. Catalyzes specifically the phosphorylation on 2'-hydroxyl of the adenosine moiety of NAD to yield NADP. The polypeptide is NAD kinase 1 (Thermosynechococcus vestitus (strain NIES-2133 / IAM M-273 / BP-1)).